We begin with the raw amino-acid sequence, 403 residues long: Acetate kinase (403 aa).

N7 serves as a coordination point for Mg(2+). K14 contacts ATP. R95 is a substrate binding site. D152 serves as the catalytic Proton donor/acceptor. Residues 212 to 216 (HLGNG), 286 to 288 (DMR), and 335 to 339 (GIGEN) contribute to the ATP site. E389 provides a ligand contact to Mg(2+).

This sequence belongs to the acetokinase family. In terms of assembly, homodimer. The cofactor is Mg(2+). Mn(2+) serves as cofactor.

It is found in the cytoplasm. It carries out the reaction acetate + ATP = acetyl phosphate + ADP. The protein operates within metabolic intermediate biosynthesis; acetyl-CoA biosynthesis; acetyl-CoA from acetate: step 1/2. Functionally, catalyzes the formation of acetyl phosphate from acetate and ATP. Can also catalyze the reverse reaction. This is Acetate kinase from Desulfovibrio desulfuricans (strain ATCC 27774 / DSM 6949 / MB).